The following is a 214-amino-acid chain: Probable GTP-binding protein EngB (214 aa).

Residues 22 to 194 (NLPEIAFAGR…WARIDALLSP (173 aa)) form the EngB-type G domain. GTP is bound by residues 30–37 (GRSNVGKS), 57–61 (GRTQL), 75–78 (DLPG), 142–145 (TKCD), and 173–175 (FSA). The Mg(2+) site is built by S37 and T59.

This sequence belongs to the TRAFAC class TrmE-Era-EngA-EngB-Septin-like GTPase superfamily. EngB GTPase family. It depends on Mg(2+) as a cofactor.

In terms of biological role, necessary for normal cell division and for the maintenance of normal septation. The chain is Probable GTP-binding protein EngB from Citrifermentans bemidjiense (strain ATCC BAA-1014 / DSM 16622 / JCM 12645 / Bem) (Geobacter bemidjiensis).